The chain runs to 101 residues: MAKTSMKAREAKRTKLVAQYAEKRAALKAIISGTDSSDEERWDAVLKLQSLPRDSSSSRQRNRCNITGRPHGFLRKFGLSRIKLRETMMRGEVPGLKKASW.

It belongs to the universal ribosomal protein uS14 family. In terms of assembly, part of the 30S ribosomal subunit. Contacts proteins S3 and S10.

In terms of biological role, binds 16S rRNA, required for the assembly of 30S particles and may also be responsible for determining the conformation of the 16S rRNA at the A site. The chain is Small ribosomal subunit protein uS14 from Colwellia psychrerythraea (strain 34H / ATCC BAA-681) (Vibrio psychroerythus).